The chain runs to 280 residues: Diaminopimelate epimerase (280 aa).

Asparagine 14 and asparagine 67 together coordinate substrate. Catalysis depends on cysteine 76, which acts as the Proton donor. Substrate is bound by residues 77-78 (GN), asparagine 193, and 210-211 (ER). The Proton acceptor role is filled by cysteine 220. 221–222 (GT) serves as a coordination point for substrate.

Belongs to the diaminopimelate epimerase family. Homodimer.

It is found in the cytoplasm. It carries out the reaction (2S,6S)-2,6-diaminopimelate = meso-2,6-diaminopimelate. Its pathway is amino-acid biosynthesis; L-lysine biosynthesis via DAP pathway; DL-2,6-diaminopimelate from LL-2,6-diaminopimelate: step 1/1. In terms of biological role, catalyzes the stereoinversion of LL-2,6-diaminopimelate (L,L-DAP) to meso-diaminopimelate (meso-DAP), a precursor of L-lysine. The protein is Diaminopimelate epimerase of Methanocella arvoryzae (strain DSM 22066 / NBRC 105507 / MRE50).